We begin with the raw amino-acid sequence, 206 residues long: Small ribosomal subunit protein uS4 (206 aa).

In terms of domain architecture, S4 RNA-binding spans 96–156 (GRLDNVVYRM…EKAKKQSRVK (61 aa)).

The protein belongs to the universal ribosomal protein uS4 family. As to quaternary structure, part of the 30S ribosomal subunit. Contacts protein S5. The interaction surface between S4 and S5 is involved in control of translational fidelity.

In terms of biological role, one of the primary rRNA binding proteins, it binds directly to 16S rRNA where it nucleates assembly of the body of the 30S subunit. With S5 and S12 plays an important role in translational accuracy. The sequence is that of Small ribosomal subunit protein uS4 from Enterobacter sp. (strain 638).